Here is a 122-residue protein sequence, read N- to C-terminus: Large ribosomal subunit protein uL14 (122 aa).

This sequence belongs to the universal ribosomal protein uL14 family. As to quaternary structure, part of the 50S ribosomal subunit. Forms a cluster with proteins L3 and L19. In the 70S ribosome, L14 and L19 interact and together make contacts with the 16S rRNA in bridges B5 and B8.

Functionally, binds to 23S rRNA. Forms part of two intersubunit bridges in the 70S ribosome. The protein is Large ribosomal subunit protein uL14 of Rubrobacter xylanophilus (strain DSM 9941 / JCM 11954 / NBRC 16129 / PRD-1).